We begin with the raw amino-acid sequence, 432 residues long: Adenylosuccinate synthetase (432 aa).

GTP contacts are provided by residues 12 to 18 (GDEGKGK) and 40 to 42 (GHT). D13 functions as the Proton acceptor in the catalytic mechanism. Mg(2+) is bound by residues D13 and G40. IMP contacts are provided by residues 13-16 (DEGK), 38-41 (NAGH), T132, R146, Q226, T241, and R305. H41 (proton donor) is an active-site residue. 301–307 (TVTGRKR) provides a ligand contact to substrate. GTP contacts are provided by residues R307, 333–335 (KLD), and 415–417 (STS).

It belongs to the adenylosuccinate synthetase family. As to quaternary structure, homodimer. The cofactor is Mg(2+).

It localises to the cytoplasm. It catalyses the reaction IMP + L-aspartate + GTP = N(6)-(1,2-dicarboxyethyl)-AMP + GDP + phosphate + 2 H(+). Its pathway is purine metabolism; AMP biosynthesis via de novo pathway; AMP from IMP: step 1/2. Its function is as follows. Plays an important role in the de novo pathway of purine nucleotide biosynthesis. Catalyzes the first committed step in the biosynthesis of AMP from IMP. The polypeptide is Adenylosuccinate synthetase (Agrobacterium fabrum (strain C58 / ATCC 33970) (Agrobacterium tumefaciens (strain C58))).